The following is a 196-amino-acid chain: Adenylate kinase (196 aa).

Gly9 to Thr17 serves as a coordination point for ATP.

This sequence belongs to the archaeal adenylate kinase family.

The protein localises to the cytoplasm. The catalysed reaction is AMP + ATP = 2 ADP. The chain is Adenylate kinase from Thermococcus kodakarensis (strain ATCC BAA-918 / JCM 12380 / KOD1) (Pyrococcus kodakaraensis (strain KOD1)).